The following is a 249-amino-acid chain: Vesicle-associated membrane protein-associated protein A (249 aa).

Ala2 is modified (N-acetylalanine). Residues 2-227 are Cytoplasmic-facing; the sequence is ASASGAMAKH…ASFRDNVTSP (226 aa). In terms of domain architecture, MSP spans 14 to 131; that stretch reads ILVLDPPTDL…MDSKLRCVFE (118 aa). Positions 50 to 53 are phosphorylated FFAT motif binding; the sequence is KVKT. Lys125 carries the N6-acetyllysine modification. The segment covering 135-144 has biased composition (basic and acidic residues); sequence ENDKLNDMEP. The segment at 135–167 is disordered; sequence ENDKLNDMEPSKAVPLNASKQDGPMPKPHSVSL. Position 166 is a phosphoserine (Ser166). The stretch at 169 to 205 forms a coiled coil; the sequence is DTETRKLMEECKRLQGEMMKLSEENRHLRDEGLRLRK. Thr170 carries the phosphothreonine modification. Phosphoserine occurs at positions 214, 216, and 219. A helical; Anchor for type IV membrane protein membrane pass occupies residues 228–248; the sequence is LPSLLVVIAAIFIGFFLGKFI.

Belongs to the VAMP-associated protein (VAP) (TC 9.B.17) family. Homodimer; disulfide-linked. Heterodimer with VAPB. Interacts with VAMP1, VAMP2, STX1A, BET1, SEC22C and with the C-terminal domain of OCLN. Interacts (via MSP domain) with OSBPL1A (via FFAT motif). Interacts (via MSP domain) with ZFYVE27; may retain ZFYVE27 in the endoplasmic reticulum and regulate its function in cell projections formation. Interacts with OSBP. Interacts (via C-terminus) with RSAD2/viperin (via C-terminus). Interacts with IFITM3. Interacts with OSBPL3 (phosphorylated form). Interacts with KIF5A in a ZFYVE27-dependent manner. Interacts (via MSP domain) with STARD3 (via phosphorylated FFAT motif); this interaction recruits VAPA to the endosome. Interacts with STARD3NL (via FFAT motif). Interacts with CERT1. Interacts with PLEKHA3 and SACM1L to form a ternary complex. Interacts with VPS13A (via FFAT motif). Interacts with RB1CC1 (via phosphorylated FFAT motif), MIGA2 (via phosphorylated FFAT motif), RMDN3 (via phosphorylated FFAT motif), KCNB1 (via phosphorylated FFAT motif) and KCNB2 (via phosphorylated FFAT motif). Interacts (via MSP domain) with WDR44 (via FFAT-like motif); the interactions connect the endoplasmic reticulum (ER) with the endosomal tubule. As to quaternary structure, (Microbial infection) Interacts with HCV protein NS5A and NS5B. Ubiquitous.

It localises to the endoplasmic reticulum membrane. Its subcellular location is the cell membrane. The protein localises to the cell junction. The protein resides in the tight junction. It is found in the nucleus membrane. In terms of biological role, endoplasmic reticulum (ER)-anchored protein that mediates the formation of contact sites between the ER and endosomes via interaction with FFAT motif-containing proteins such as STARD3 or WDR44. STARD3-VAPA interaction enables cholesterol transfer from the ER to endosomes. Via interaction with WDR44 participates in neosynthesized protein export. In addition, recruited to the plasma membrane through OSBPL3 binding. The OSBPL3-VAPA complex stimulates RRAS signaling which in turn attenuates integrin beta-1 (ITGB1) activation at the cell surface. With OSBPL3, may regulate ER morphology. May play a role in vesicle trafficking. This chain is Vesicle-associated membrane protein-associated protein A, found in Homo sapiens (Human).